The chain runs to 82 residues: Cytochrome b559 subunit alpha (82 aa).

The chain crosses the membrane as a helical span at residues 22-36 (VIHAITLPSIFLAGF). A heme-binding site is contributed by His-24.

This sequence belongs to the PsbE/PsbF family. Heterodimer of an alpha subunit and a beta subunit. PSII is composed of 1 copy each of membrane proteins PsbA, PsbB, PsbC, PsbD, PsbE, PsbF, PsbH, PsbI, PsbJ, PsbK, PsbL, PsbM, PsbT, PsbX, PsbY, PsbZ, Psb30/Ycf12, peripheral proteins PsbO, CyanoQ (PsbQ), PsbU, PsbV and a large number of cofactors. It forms dimeric complexes. Requires heme b as cofactor.

The protein localises to the cellular thylakoid membrane. Functionally, this b-type cytochrome is tightly associated with the reaction center of photosystem II (PSII). PSII is a light-driven water:plastoquinone oxidoreductase that uses light energy to abstract electrons from H(2)O, generating O(2) and a proton gradient subsequently used for ATP formation. It consists of a core antenna complex that captures photons, and an electron transfer chain that converts photonic excitation into a charge separation. The polypeptide is Cytochrome b559 subunit alpha (Synechococcus sp. (strain CC9311)).